The chain runs to 52 residues: Large ribosomal subunit protein bL33A (52 aa).

It belongs to the bacterial ribosomal protein bL33 family.

The protein is Large ribosomal subunit protein bL33A of Staphylococcus aureus (strain USA300).